The primary structure comprises 759 residues: Solute carrier family 26 member 6 (759 aa).

Residues 1 to 115 (MGLADASGPR…PQGLAYALLA (115 aa)) are Cytoplasmic-facing. Residues 116–136 (GLPPVFGLYSSFYPVFIYFLF) form a helical membrane-spanning segment. Residues 137-186 (GTSRHISVGTFAVMSVMVGSVTESLAPQALNDSMINETARDAARVQVAST) lie on the Extracellular side of the membrane. Residues Asn-167 and Asn-172 are each glycosylated (N-linked (GlcNAc) asparagine). Residues 187 to 207 (LSVLVGLFQVGLGLIHFGFVV) form a helical membrane-spanning segment. The Cytoplasmic portion of the chain corresponds to 208 to 263 (TYLSEPLVRGYTTAAAVQVFVSQLKYVFGLHLSSHSGPLSLIYTVLEVCWKLPQSK). Residues 264 to 284 (VGTVVTAAVAGVVLVVVKLLN) form a helical membrane-spanning segment. At 285-293 (DKLQQQLPM) the chain is on the extracellular side. A helical membrane pass occupies residues 294 to 314 (PIPGELLTLIGATGISYGMGL). Residues 315 to 347 (KHRFEVDVVGNIPAGLVPPVAPNTQLFSKLVGS) lie on the Cytoplasmic side of the membrane. A helical transmembrane segment spans residues 348 to 368 (AFTIAVVGFAIAISLGKIFAL). Over 369–379 (RHGYRVDSNQE) the chain is Extracellular. A helical membrane pass occupies residues 380-400 (LVALGLSNLIGGIFQCFPVSC). Residues 401–416 (SMSRSLVQESTGGNSQ) are Cytoplasmic-facing. Residues 417-437 (VAGAISSLFILLIIVKLGELF) traverse the membrane as a helical segment. The Extracellular portion of the chain corresponds to 438–484 (HDLPKAVLAAIIIVNLKGMLRQLSDMRSLWKANRADLLIWLVTFTAT). Residues 485 to 505 (ILLNLDLGLVVAVIFSLLLVV) traverse the membrane as a helical segment. The Cytoplasmic portion of the chain corresponds to 506–759 (VRTQMPHYSV…PDSPVSVTRL (254 aa)). The STAS domain maps to 530–742 (EYSEAKEVRG…ASVHDAVTFA (213 aa)). A phosphoserine; by PKC mark is found at Asn-553 and Lys-582. Ser-616 carries the post-translational modification Phosphoserine. The segment at 636–657 (GDKMEDATANGQEDSKAPDGST) is disordered. Phosphoserine occurs at positions 752 and 755.

The protein belongs to the SLC26A/SulP transporter (TC 2.A.53) family. As to quaternary structure, interacts (via C-terminal domain) with PDZK1 (via C-terminal PDZ domain); the interaction induces chloride and oxalate exchange transport. Interacts with CFTR and SLC26A3. Interacts with AHCYL1; the interaction increases SLC26A6 activity. In terms of assembly, interacts with NHERF1 (via the PDZ domains) and NHERF2 (via the PDZ domains). Interacts (via C-terminal cytoplasmic domain) with CA2; the interaction stimulates chloride-bicarbonate exchange activity. Interacts with NHERF1 (via the PDZ domains) and NHERF2 (via the PDZ domains). Phosphorylated on serine residues by PKC; the phosphorylation disrupts interaction with carbonic anhydrase CA2 and reduces bicarbonate transport activity in a phorbol myristate acetate (PMA)-induced manner. Post-translationally, glycosylation at Asn-167 and Asn-172 positively regulates its chloride oxalate exchanger activity. As to expression, ubiquitous. Highest levels in kidney and pancreas. Lower expression in heart, skeletal muscle, liver and placenta. Also found in lung and brain. Ubiquitously expressed. Highest levels expressed in the kidney and pancreas. In terms of tissue distribution, expressed weakly in placenta, lung, liver and pancreas. As to expression, expressed in heart, brain, placenta, lung, liver, kidney, pancreas, spleen, thymus, prostate, testis and ovary.

The protein localises to the cell membrane. It localises to the apical cell membrane. The protein resides in the cytoplasmic vesicle membrane. It is found in the microsome. Its subcellular location is the basolateral cell membrane. It carries out the reaction 2 hydrogencarbonate(in) + chloride(out) = 2 hydrogencarbonate(out) + chloride(in). The enzyme catalyses oxalate(in) + chloride(out) = oxalate(out) + chloride(in). The catalysed reaction is oxalate(in) + formate(out) = oxalate(out) + formate(in). It catalyses the reaction oxalate(in) + sulfate(out) = oxalate(out) + sulfate(in). It carries out the reaction 2 hydrogencarbonate(out) + sulfate(in) = 2 hydrogencarbonate(in) + sulfate(out). With respect to regulation, oxalate transport activity is inhibited by 4,4'-diisothiocyanatostilbene-2,2'-disulfonic acid (DIDS). Its activity is regulated as follows. Chloride, bicarbonate and sulfate transport activities are inhibited by 4,4'-diisothiocyanatostilbene-2,2'-disulfonic acid (DIDS). Functionally, apical membrane anion-exchanger with wide epithelial distribution that plays a role as a component of the pH buffering system for maintaining acid-base homeostasis. Acts as a versatile DIDS-sensitive inorganic and organic anion transporter that mediates the uptake of monovalent anions like chloride, bicarbonate, formate and hydroxyl ion and divalent anions like sulfate and oxalate. Functions in multiple exchange modes involving pairs of these anions, which include chloride-bicarbonate, chloride-oxalate, oxalate-formate, oxalate-sulfate and chloride-formate exchange. Apical membrane chloride-bicarbonate exchanger that mediates luminal chloride absorption and bicarbonate secretion by the small intestinal brush border membrane and contributes to intracellular pH regulation in the duodenal upper villous epithelium during proton-coupled peptide absorption, possibly by providing a bicarbonate import pathway. Also mediates intestinal chloride absorption and oxalate secretion, thereby preventing hyperoxaluria and calcium oxalate urolithiasis. Transepithelial oxalate secretion, chloride-formate, chloride-oxalate and chloride-bicarbonate transport activities in the duodenum are inhibited by PKC activation in a calcium-independent manner. The apical membrane chloride-bicarbonate exchanger also provides a major route for fluid and bicarbonate secretion into the proximal tubules of the kidney as well as into the proximal part of the interlobular pancreatic ductal tree, where it mediates electrogenic chloride-bicarbonate exchange with a chloride-bicarbonate stoichiometry of 1:2, and hence will dilute and alkalinize protein-rich acinar secretion. Also mediates the transcellular sulfate absorption and oxalate secretion across the apical membrane in the duodenum and the formate ion efflux at the apical brush border of cells in the proximal tubules of kidney. Plays a role in sperm capacitation by increasing intracellular pH. Apical membrane chloride-bicarbonate exchanger. Its association with carbonic anhydrase CA2 forms a bicarbonate transport metabolon; hence maximizes the local concentration of bicarbonate at the transporter site. The protein is Solute carrier family 26 member 6 (SLC26A6) of Homo sapiens (Human).